The sequence spans 857 residues: A-kinase anchor protein 1, mitochondrial (857 aa).

A mitochondrion-targeting transit peptide spans 1–29 (MAIQLRSLFPLALPGMLALLGWWWFFSRK). Phosphoserine is present on S55. The segment at 65 to 121 (VAPTVTQPPGREEQRCVDKPSTEPLALPRTRQVRRRSESSGNLPSVADTRSQPGPCR) is disordered. Positions 74–85 (GREEQRCVDKPS) are enriched in basic and acidic residues. S101, S103, and S164 each carry phosphoserine. Residues 103–116 (SSGNLPSVADTRSQ) show a composition bias toward polar residues. 2 disordered regions span residues 165–198 (ALGK…GDAV) and 260–303 (FVEP…VPEN). A compositionally biased stretch (basic and acidic residues) spans 286 to 299 (SDRDLAGELDKDET). Positions 306–319 (IKQAAFQLISQVIL) are PKA-RII subunit binding domain. Disordered stretches follow at residues 336 to 437 (QVHP…NPRG), 466 to 497 (STSG…TQPF), and 512 to 554 (EDGW…QAGS). Residues 354-379 (PASQETSLGQDTSDPASTRTGATASP) show a composition bias toward polar residues. T401 carries the post-translational modification Phosphothreonine. Positions 466–482 (STSGLEDSCTETISSSG) are enriched in polar residues. Residue T487 is modified to Phosphothreonine. Phosphoserine is present on residues S527 and S546. Over residues 545–554 (DSPQSVQAGS) the composition is skewed to polar residues. The KH domain occupies 561 to 625 (LIIWEIEVPK…HHVDKALNLI (65 aa)). The 60-residue stretch at 712 to 771 (PVEITVICAAPGADGAWWRAQVVASYEETNEVEIRYVDYGGYKRVKVDVLRQIRSDFVTL) folds into the Tudor domain.

In terms of assembly, interacts with SLC8A3. Interacts with CFAP91. Interacts with CLPB. Interacts with NDUFS1. In terms of tissue distribution, highest expression in testis, heart, liver, skeletal muscle, intestine and kidney, followed by brain and lung. No expression in spleen. Isoform 1/D-AKAP1A is expressed predominantly in testis whereas isoform 4/D-AKAP1D is expressed primarily in liver. Expression is decreased in hearts of diabetic mice (at protein level).

The protein resides in the mitochondrion outer membrane. It is found in the mitochondrion. The protein localises to the endoplasmic reticulum. Its function is as follows. Differentially targeted protein that binds to type I and II regulatory subunits of protein kinase A. Anchors them to the cytoplasmic face of the mitochondrial outer membrane or allows them to reside in the endoplasmic reticulum. Involved in mitochondrial-mediated antiviral innate immunity. Promotes translocation of NDUFS1 into mitochondria to regulate mitochondrial membrane respiratory chain NADH dehydrogenase (Complex I) activity. Under diabetic conditions, myocardial AKAP1 expression decreases which blocks the translocation of NDUFS1 from the cytosol to mitochondria. Reduction of NDUFS1 in mitochondria decreases ATP production and increases mitochondrial ROS level, which causes mitochondrial dysfunction and cell apoptosis, respectively, thereby leading to cardiac dysfunction. The sequence is that of A-kinase anchor protein 1, mitochondrial from Mus musculus (Mouse).